A 242-amino-acid polypeptide reads, in one-letter code: Phosphoribosylaminoimidazole-succinocarboxamide synthase (242 aa).

It belongs to the SAICAR synthetase family.

The catalysed reaction is 5-amino-1-(5-phospho-D-ribosyl)imidazole-4-carboxylate + L-aspartate + ATP = (2S)-2-[5-amino-1-(5-phospho-beta-D-ribosyl)imidazole-4-carboxamido]succinate + ADP + phosphate + 2 H(+). It functions in the pathway purine metabolism; IMP biosynthesis via de novo pathway; 5-amino-1-(5-phospho-D-ribosyl)imidazole-4-carboxamide from 5-amino-1-(5-phospho-D-ribosyl)imidazole-4-carboxylate: step 1/2. This chain is Phosphoribosylaminoimidazole-succinocarboxamide synthase, found in Trichodesmium erythraeum (strain IMS101).